We begin with the raw amino-acid sequence, 398 residues long: Lysophosphatidylserine lipase ABHD12 (398 aa).

The span at 1 to 15 shows a compositional bias: basic and acidic residues; the sequence is MRKRTEPVTLEHERC. The tract at residues 1–24 is disordered; sequence MRKRTEPVTLEHERCAASGSSSSG. At 1–74 the chain is on the cytoplasmic side; that stretch reads MRKRTEPVTL…RKSLWFRLRK (74 aa). Residues 75-95 traverse the membrane as a helical segment; it reads ILLCVLGFYIAIPFLVKLCPG. Over 96–398 the chain is Extracellular; that stretch reads IQAKLIFLNF…LGKSEPERQH (303 aa). N-linked (GlcNAc...) asparagine glycosylation occurs at Asn-123. Ser-246 serves as the catalytic Nucleophile. Active-site charge relay system residues include Asp-333 and His-372.

The protein belongs to the serine esterase family.

The protein localises to the endoplasmic reticulum membrane. It catalyses the reaction 1-(9Z-octadecenoyl)-sn-glycero-3-phospho-L-serine + H2O = sn-glycero-3-phospho-L-serine + (9Z)-octadecenoate + H(+). The enzyme catalyses 1-(9Z-octadecenoyl)-sn-glycero-3-phospho-(1'-sn-glycerol) + H2O = sn-glycero-3-phospho-(1'-sn-glycerol) + (9Z)-octadecenoate + H(+). The catalysed reaction is 1-(9Z-octadecenoyl)-sn-glycero-3-phospho-(1D-myo-inositol) + H2O = sn-glycero-3-phospho-1D-myo-inositol + (9Z)-octadecenoate + H(+). It carries out the reaction 1-(9Z-octadecenoyl)-sn-glycero-3-phosphoethanolamine + H2O = sn-glycero-3-phosphoethanolamine + (9Z)-octadecenoate + H(+). It catalyses the reaction 1-(9Z-octadecenoyl)-sn-glycero-3-phosphocholine + H2O = 1-(9Z-octadecenoyl)-sn-glycerol + phosphocholine + H(+). The enzyme catalyses 2-(9Z-octadecenoyl)-glycerol + H2O = glycerol + (9Z)-octadecenoate + H(+). The catalysed reaction is 1-hexadecanoyl-sn-glycero-3-phospho-L-serine + H2O = sn-glycero-3-phospho-L-serine + hexadecanoate + H(+). It carries out the reaction 2-(5Z,8Z,11Z,14Z-eicosatetraenoyl)-glycerol + H2O = glycerol + (5Z,8Z,11Z,14Z)-eicosatetraenoate + H(+). It catalyses the reaction Hydrolyzes glycerol monoesters of long-chain fatty acids.. The enzyme catalyses 1-decanoylglycerol + H2O = decanoate + glycerol + H(+). The catalysed reaction is 1-dodecanoylglycerol + H2O = dodecanoate + glycerol + H(+). It carries out the reaction 1-tetradecanoylglycerol + H2O = tetradecanoate + glycerol + H(+). It catalyses the reaction 2-hexadecanoylglycerol + H2O = glycerol + hexadecanoate + H(+). The enzyme catalyses 1-(9Z-octadecenoyl)-glycerol + H2O = glycerol + (9Z)-octadecenoate + H(+). The catalysed reaction is 2-(9Z,12Z-octadecadienoyl)-glycerol + H2O = (9Z,12Z)-octadecadienoate + glycerol + H(+). It carries out the reaction 1-(5Z,8Z,11Z,14Z-eicosatetraenoyl)-glycerol + H2O = glycerol + (5Z,8Z,11Z,14Z)-eicosatetraenoate + H(+). It catalyses the reaction 1-(9Z,12Z-octadecadienoyl)-glycerol + H2O = (9Z,12Z)-octadecadienoate + glycerol + H(+). The enzyme catalyses 1-hexadecanoylglycerol + H2O = glycerol + hexadecanoate + H(+). The catalysed reaction is 1-octadecanoylglycerol + H2O = octadecanoate + glycerol + H(+). It carries out the reaction 1-octadecanoyl-2-(9,10-epoxyoctadecanoyl)-sn-glycero-3-phospho-L-serine + H2O = 9,10-epoxyoctadecanoate + 1-octadecanoyl-sn-glycero-3-phosphoserine + H(+). It catalyses the reaction 1-octadecanoyl-2-(10-hydroxyoctadecanoyl)-sn-glycero-3-phospho-L-serine + H2O = 1-octadecanoyl-sn-glycero-3-phosphoserine + 10-hydroxyoctadecanoate + H(+). The enzyme catalyses 1-hexadecanoyl-2-(10-hydroxyoctadecanoyl)-sn-glycero-3-phospho-L-serine + H2O = 10-hydroxyoctadecanoate + 1-hexadecanoyl-sn-glycero-3-phospho-L-serine + H(+). Its function is as follows. Lysophosphatidylserine (LPS) lipase that mediates the hydrolysis of lysophosphatidylserine, a class of signaling lipids that regulates immunological and neurological processes. Represents a major lysophosphatidylserine lipase in the brain, thereby playing a key role in the central nervous system. Also able to hydrolyze oxidized phosphatidylserine; oxidized phosphatidylserine is produced in response to severe inflammatory stress and constitutes a proapoptotic 'eat me' signal. Also has monoacylglycerol (MAG) lipase activity: hydrolyzes 2-arachidonoylglycerol (2-AG), thereby acting as a regulator of endocannabinoid signaling pathways. Has a strong preference for very-long-chain lipid substrates; substrate specificity is likely due to improved catalysis and not improved substrate binding. The protein is Lysophosphatidylserine lipase ABHD12 of Rattus norvegicus (Rat).